An 85-amino-acid chain; its full sequence is Large ribosomal subunit protein bL27 (85 aa).

The disordered stretch occupies residues 1-20 (MAHKKGASSSRNGRDSNAQR). Residues 7–19 (ASSSRNGRDSNAQ) are compositionally biased toward polar residues.

This sequence belongs to the bacterial ribosomal protein bL27 family.

The sequence is that of Large ribosomal subunit protein bL27 from Kineococcus radiotolerans (strain ATCC BAA-149 / DSM 14245 / SRS30216).